We begin with the raw amino-acid sequence, 118 residues long: Large ribosomal subunit protein bL19 (118 aa).

The protein belongs to the bacterial ribosomal protein bL19 family.

This protein is located at the 30S-50S ribosomal subunit interface and may play a role in the structure and function of the aminoacyl-tRNA binding site. In Helicobacter hepaticus (strain ATCC 51449 / 3B1), this protein is Large ribosomal subunit protein bL19.